Reading from the N-terminus, the 467-residue chain is RuvB-like helicase 2 (467 aa).

Position 73 to 80 (73 to 80 (GPPSTGKT)) interacts with ATP.

This sequence belongs to the RuvB family. May form heterododecamers with RVB1. Component of the SWR1 chromatin remodeling complex, the INO80 chromatin remodeling complex, and of the R2TP complex.

It localises to the nucleus. The catalysed reaction is ATP + H2O = ADP + phosphate + H(+). In terms of biological role, DNA helicase which participates in several chromatin remodeling complexes, including the SWR1 and the INO80 complexes. The SWR1 complex mediates the ATP-dependent exchange of histone H2A for the H2A variant HZT1 leading to transcriptional regulation of selected genes by chromatin remodeling. The INO80 complex remodels chromatin by shifting nucleosomes and is involved in DNA repair. Also involved in pre-rRNA processing. In Kluyveromyces lactis (strain ATCC 8585 / CBS 2359 / DSM 70799 / NBRC 1267 / NRRL Y-1140 / WM37) (Yeast), this protein is RuvB-like helicase 2 (RVB2).